Here is a 397-residue protein sequence, read N- to C-terminus: CCA-adding enzyme (397 aa).

The ATP site is built by glycine 26 and arginine 29. Positions 26 and 29 each coordinate CTP. Residues aspartate 39 and aspartate 41 each contribute to the Mg(2+) site. Arginine 110, aspartate 153, arginine 156, arginine 159, and arginine 162 together coordinate ATP. The CTP site is built by arginine 110, aspartate 153, arginine 156, arginine 159, and arginine 162.

This sequence belongs to the tRNA nucleotidyltransferase/poly(A) polymerase family. Bacterial CCA-adding enzyme type 3 subfamily. In terms of assembly, homodimer. Mg(2+) is required as a cofactor.

The catalysed reaction is a tRNA precursor + 2 CTP + ATP = a tRNA with a 3' CCA end + 3 diphosphate. It catalyses the reaction a tRNA with a 3' CCA end + 2 CTP + ATP = a tRNA with a 3' CCACCA end + 3 diphosphate. Catalyzes the addition and repair of the essential 3'-terminal CCA sequence in tRNAs without using a nucleic acid template. Adds these three nucleotides in the order of C, C, and A to the tRNA nucleotide-73, using CTP and ATP as substrates and producing inorganic pyrophosphate. tRNA 3'-terminal CCA addition is required both for tRNA processing and repair. Also involved in tRNA surveillance by mediating tandem CCA addition to generate a CCACCA at the 3' terminus of unstable tRNAs. While stable tRNAs receive only 3'-terminal CCA, unstable tRNAs are marked with CCACCA and rapidly degraded. The polypeptide is CCA-adding enzyme (Bacillus thuringiensis subsp. konkukian (strain 97-27)).